A 313-amino-acid chain; its full sequence is Ribosomal RNA small subunit methyltransferase H (313 aa).

Residues 35-37, Asp55, Phe79, Asp101, and Gln108 contribute to the S-adenosyl-L-methionine site; that span reads GGH.

The protein belongs to the methyltransferase superfamily. RsmH family.

Its subcellular location is the cytoplasm. The enzyme catalyses cytidine(1402) in 16S rRNA + S-adenosyl-L-methionine = N(4)-methylcytidine(1402) in 16S rRNA + S-adenosyl-L-homocysteine + H(+). Its function is as follows. Specifically methylates the N4 position of cytidine in position 1402 (C1402) of 16S rRNA. This chain is Ribosomal RNA small subunit methyltransferase H, found in Escherichia coli O81 (strain ED1a).